Consider the following 309-residue polypeptide: Caspase-7 (309 aa).

The propeptide at 1-24 (MSGDQHADRSSGEKSNGDQDDTVD) is N-terminally processed. The segment covering 1–31 (MSGDQHADRSSGEKSNGDQDDTVDAKPDRSS) has biased composition (basic and acidic residues). The disordered stretch occupies residues 1–53 (MSGDQHADRSSGEKSNGDQDDTVDAKPDRSSRLSLFAKKKKNGEEEQPKSSLS). The segment at 39–42 (KKKN) is exosite. A loop L1 region spans residues 81–92 (KNFEDKTGMGTR). Active-site residues include His149 and Cys191. The tract at residues 192–201 (RGSEFDEGIQ) is loop L2. Residues 204–214 (SGPANDTLETD) constitute a propeptide that is removed on maturation. The interval 234 to 246 (VPGYYSWRNPGRG) is loop L3. Residues 282 to 296 (ESQSDDPRFSEKKQI) form a loop L4 region.

Belongs to the peptidase C14A family. As to quaternary structure, heterotetramer that consists of two anti-parallel arranged heterodimers, each one formed by a 20 kDa (p20) and a 11 kDa (p11) subunit. Cleavage by different proteases, such as granzyme B (GZMB), caspase-1 (CASP1), caspase-8 (CASP8) or caspase-9 (CASP9) generate the two active subunits. Its involvement in different programmed cell death processes is probably specified by the protease that activates CASP7. Cleaved and activated by initiator caspases (CASP8 and/or CASP9), leading to execution phase of apoptosis. Cleavage and maturation by GZMB regulates granzyme-mediated programmed cell death. Cleaved and activated by CASP1 in response to bacterial infection.

It is found in the cytoplasm. The protein resides in the cytosol. The protein localises to the nucleus. It localises to the secreted. Its subcellular location is the extracellular space. The catalysed reaction is Strict requirement for an Asp residue at position P1 and has a preferred cleavage sequence of Asp-Glu-Val-Asp-|-.. Its activity is regulated as follows. During activation, the N-terminal disordered prodomain is removed by cleavage. Concomitantly, double cleavage gives rise to a large Caspase-7 subunit p20 and a small Caspase-7 subunit p11. The two large and two small subunits then assemble to form the active CASP7 complex. Can be cleaved and activated by different caspases, depending on the context. Cleaved and activated by initiator caspases (CASP8 and/or CASP9), leading to execution phase of apoptosis. Cleavage and maturation by GZMB regulates granzyme-mediated programmed cell death. Cleavage and maturation by CASP1 regulates pyroptosis. Inhibited by BIRC6; following inhibition of BIRC6-caspase binding by DIABLO/SMAC, BIRC6 is subjected to caspase cleavage, leading to an increase in active caspases. Functionally, thiol protease involved in different programmed cell death processes, such as apoptosis, pyroptosis or granzyme-mediated programmed cell death, by proteolytically cleaving target proteins. Has a marked preference for Asp-Glu-Val-Asp (DEVD) consensus sequences, with some plasticity for alternate non-canonical sequences. Its involvement in the different programmed cell death processes is probably determined by upstream proteases that activate CASP7. Acts as an effector caspase involved in the execution phase of apoptosis: following cleavage and activation by initiator caspases (CASP8 and/or CASP9), mediates execution of apoptosis by catalyzing cleavage of proteins. Compared to CASP3, acts as a minor executioner caspase and cleaves a limited set of target proteins. Acts as a key regulator of the inflammatory response in response to bacterial infection by catalyzing cleavage and activation of the sphingomyelin phosphodiesterase SMPD1 in the extracellular milieu, thereby promoting membrane repair. Cleaves BIRC6 following inhibition of BIRC6-caspase binding by DIABLO/SMAC. The chain is Caspase-7 from Gallus gallus (Chicken).